Reading from the N-terminus, the 53-residue chain is Small ribosomal subunit protein uS14 (53 aa).

Positions 17, 20, 36, and 39 each coordinate Zn(2+).

Belongs to the universal ribosomal protein uS14 family. Zinc-binding uS14 subfamily. As to quaternary structure, part of the 30S ribosomal subunit. It depends on Zn(2+) as a cofactor.

In terms of biological role, binds 16S rRNA, required for the assembly of 30S particles. This chain is Small ribosomal subunit protein uS14, found in Methanococcus maripaludis (strain DSM 14266 / JCM 13030 / NBRC 101832 / S2 / LL).